Reading from the N-terminus, the 456-residue chain is Nuclear distribution protein PAC1 (456 aa).

The LisH domain maps to 9 to 41 (QADELHKSIIAYLSANDLPNTAAALRAELNLTE). Residues 61–88 (TSIVRLQKKIMDLEARNAALQSELDNLT) are a coiled coil. 8 WD repeats span residues 114–153 (SHRD…LEMT), 156–197 (GHTR…KNVR), 201–240 (GHDH…CVRS), 243–282 (GHTG…NPEN), 288–348 (GHEH…LMTL), 350–389 (GHDN…KCVK), 394–437 (AHDR…PDVQ), and 439–456 (RCVI…IFAA).

Belongs to the WD repeat LIS1/nudF family. Self-associates. Interacts with NDL1 and dynein.

It localises to the cytoplasm. It is found in the cytoskeleton. The protein resides in the spindle pole. Functionally, positively regulates the activity of the minus-end directed microtubule motor protein dynein. May enhance dynein-mediated microtubule sliding by targeting dynein to the microtubule plus end. Required for nuclear migration during vegetative growth as well as development. Required for retrograde early endosome (EE) transport from the hyphal tip. Required for localization of dynein to the mitotic spindle poles. Recruits additional proteins to the dynein complex at SPBs. The sequence is that of Nuclear distribution protein PAC1 from Ajellomyces capsulatus (strain H143) (Darling's disease fungus).